The sequence spans 175 residues: Protein UPS1, mitochondrial (175 aa).

The segment at 1–80 is required for mitochondrial targeting; sequence MVLLHKSTHI…RGITETWIIE (80 aa). The region spanning 2–172 is the PRELI/MSF1 domain; it reads VLLHKSTHIF…VIQKLEEARN (171 aa). A 1,2-diacyl-sn-glycero-3-phosphate is bound by residues Tyr26, Lys58, Lys148, and Asn152.

This sequence belongs to the slowmo family. Interacts with MDM35. Found associated with a 170 kDa complex.

The protein localises to the mitochondrion inner membrane. It is found in the mitochondrion intermembrane space. Required for maintenance of normal mitochondrial morphology. Required for PCP1-dependent processing of MGM1. The UPS1:MDM35 complex mediates the transfer of phosphatidic acid (PA) between liposomes and probably functions as a PA transporter across the mitochondrion intermembrane space. Phosphatidic acid release requires dissociation of the UPS1:MDM35 complex. Phosphatidic acid import is required for cardiolipin (CL) synthesis in the mitochondrial inner membrane. With UPS2, controls the level of cardiolipin in mitochondria. Cardiolipin is a unique phospholipid with four fatty acid chains and is present mainly in the mitochondrial inner membrane where it stabilizes the electron transport chain supercomplex between complexes III and IV through direct interaction of their subunits. In Saccharomyces cerevisiae (strain ATCC 204508 / S288c) (Baker's yeast), this protein is Protein UPS1, mitochondrial (UPS1).